A 300-amino-acid chain; its full sequence is Ribosomal RNA small subunit methyltransferase H (300 aa).

Residues 33 to 35, Asp-53, Phe-78, Asp-97, and Gln-104 each bind S-adenosyl-L-methionine; that span reads GGH.

It belongs to the methyltransferase superfamily. RsmH family.

The protein resides in the cytoplasm. It carries out the reaction cytidine(1402) in 16S rRNA + S-adenosyl-L-methionine = N(4)-methylcytidine(1402) in 16S rRNA + S-adenosyl-L-homocysteine + H(+). In terms of biological role, specifically methylates the N4 position of cytidine in position 1402 (C1402) of 16S rRNA. In Karelsulcia muelleri (strain GWSS) (Sulcia muelleri), this protein is Ribosomal RNA small subunit methyltransferase H.